The chain runs to 304 residues: ATP phosphoribosyltransferase (304 aa).

This sequence belongs to the ATP phosphoribosyltransferase family. Long subfamily. Requires Mg(2+) as cofactor.

The protein resides in the cytoplasm. The enzyme catalyses 1-(5-phospho-beta-D-ribosyl)-ATP + diphosphate = 5-phospho-alpha-D-ribose 1-diphosphate + ATP. Its pathway is amino-acid biosynthesis; L-histidine biosynthesis; L-histidine from 5-phospho-alpha-D-ribose 1-diphosphate: step 1/9. Feedback inhibited by histidine. Functionally, catalyzes the condensation of ATP and 5-phosphoribose 1-diphosphate to form N'-(5'-phosphoribosyl)-ATP (PR-ATP). Has a crucial role in the pathway because the rate of histidine biosynthesis seems to be controlled primarily by regulation of HisG enzymatic activity. This chain is ATP phosphoribosyltransferase, found in Xylella fastidiosa (strain 9a5c).